The sequence spans 655 residues: Gastrulation defective protein 1 homolog (655 aa).

2 disordered regions span residues 1 to 54 (MQRG…EQMI) and 83 to 165 (AKVF…DEQS). Composition is skewed to basic and acidic residues over residues 23–36 (RSNETEAEDAKEST), 91–115 (QIEKARVTRPGMDKKREESKPKEDD), and 134–146 (TDKEKATKESSKD). The span at 147–164 (EDSDDDDYSSDEDSDDEQ) shows a compositional bias: acidic residues. WD repeat units follow at residues 180–219 (HGSRAVLALAGDPSGARLVSGSIDYDMCFWDFAGMDSSMR), 227–268 (CENH…ECCK), 281–321 (GHVA…EQLQ), 330–369 (GLRTNAASCNFNRDATLIAAGCVDGSIQTWDTRKMFVNTT), 377–416 (QKGSEITSIVFSYMGQQLATRSNDETMKLWDLRQFKQPLH), 422–467 (FSRY…EVQR), and 470–510 (VSNA…RGAK). Disordered regions lie at residues 544–580 (KSRTSRKRMEKARMDPVKSQRPDLPITSGQGGRVASS) and 633–655 (AIFSEKLPADEPATKKPKTEADK). 2 stretches are compositionally biased toward basic and acidic residues: residues 554–564 (KARMDPVKSQR) and 639–655 (LPADEPATKKPKTEADK).

This sequence belongs to the WD repeat GAD-1 family.

This is Gastrulation defective protein 1 homolog from Drosophila melanogaster (Fruit fly).